A 284-amino-acid polypeptide reads, in one-letter code: Bifunctional protein FolD (284 aa).

Residues glycine 166–serine 168 and isoleucine 232 each bind NADP(+).

It belongs to the tetrahydrofolate dehydrogenase/cyclohydrolase family. Homodimer.

It catalyses the reaction (6R)-5,10-methylene-5,6,7,8-tetrahydrofolate + NADP(+) = (6R)-5,10-methenyltetrahydrofolate + NADPH. It carries out the reaction (6R)-5,10-methenyltetrahydrofolate + H2O = (6R)-10-formyltetrahydrofolate + H(+). It participates in one-carbon metabolism; tetrahydrofolate interconversion. Its function is as follows. Catalyzes the oxidation of 5,10-methylenetetrahydrofolate to 5,10-methenyltetrahydrofolate and then the hydrolysis of 5,10-methenyltetrahydrofolate to 10-formyltetrahydrofolate. This is Bifunctional protein FolD from Pseudoalteromonas translucida (strain TAC 125).